We begin with the raw amino-acid sequence, 212 residues long: Large ribosomal subunit protein uL1 (212 aa).

This sequence belongs to the universal ribosomal protein uL1 family. As to quaternary structure, part of the 50S ribosomal subunit.

Binds directly to 23S rRNA. Probably involved in E site tRNA release. Functionally, protein L1 is also a translational repressor protein, it controls the translation of its operon by binding to its mRNA. This Methanothermobacter thermautotrophicus (strain ATCC 29096 / DSM 1053 / JCM 10044 / NBRC 100330 / Delta H) (Methanobacterium thermoautotrophicum) protein is Large ribosomal subunit protein uL1.